Here is a 288-residue protein sequence, read N- to C-terminus: Diaminopimelate epimerase (288 aa).

Asn14 and Asn67 together coordinate substrate. Cys76 (proton donor) is an active-site residue. Residues 77–78 (GN), Asn166, Asn199, and 217–218 (ER) contribute to the substrate site. The active-site Proton acceptor is the Cys226. 227–228 (GT) is a binding site for substrate.

It belongs to the diaminopimelate epimerase family. As to quaternary structure, homodimer.

The protein localises to the cytoplasm. It catalyses the reaction (2S,6S)-2,6-diaminopimelate = meso-2,6-diaminopimelate. The protein operates within amino-acid biosynthesis; L-lysine biosynthesis via DAP pathway; DL-2,6-diaminopimelate from LL-2,6-diaminopimelate: step 1/1. Functionally, catalyzes the stereoinversion of LL-2,6-diaminopimelate (L,L-DAP) to meso-diaminopimelate (meso-DAP), a precursor of L-lysine and an essential component of the bacterial peptidoglycan. The chain is Diaminopimelate epimerase from Bacillus cytotoxicus (strain DSM 22905 / CIP 110041 / 391-98 / NVH 391-98).